Here is a 199-residue protein sequence, read N- to C-terminus: Holliday junction branch migration complex subunit RuvA (199 aa).

A domain I region spans residues 1 to 63 (MIASVRGEVL…EDSMTLYGFT (63 aa)). The interval 64–142 (DAETRDLFLT…AAGAAGAPAG (79 aa)) is domain II. The interval 143–153 (AARNGHAVRGP) is flexible linker. The segment at 153–199 (PVVEALVGLGFAAKQAEEATDKVLAAEPEAGTSGALRAALSLLGKSR) is domain III.

It belongs to the RuvA family. As to quaternary structure, homotetramer. Forms an RuvA(8)-RuvB(12)-Holliday junction (HJ) complex. HJ DNA is sandwiched between 2 RuvA tetramers; dsDNA enters through RuvA and exits via RuvB. An RuvB hexamer assembles on each DNA strand where it exits the tetramer. Each RuvB hexamer is contacted by two RuvA subunits (via domain III) on 2 adjacent RuvB subunits; this complex drives branch migration. In the full resolvosome a probable DNA-RuvA(4)-RuvB(12)-RuvC(2) complex forms which resolves the HJ.

The protein localises to the cytoplasm. In terms of biological role, the RuvA-RuvB-RuvC complex processes Holliday junction (HJ) DNA during genetic recombination and DNA repair, while the RuvA-RuvB complex plays an important role in the rescue of blocked DNA replication forks via replication fork reversal (RFR). RuvA specifically binds to HJ cruciform DNA, conferring on it an open structure. The RuvB hexamer acts as an ATP-dependent pump, pulling dsDNA into and through the RuvAB complex. HJ branch migration allows RuvC to scan DNA until it finds its consensus sequence, where it cleaves and resolves the cruciform DNA. The polypeptide is Holliday junction branch migration complex subunit RuvA (Mycobacterium avium (strain 104)).